Consider the following 324-residue polypeptide: Beta-ketoacyl-[acyl-carrier-protein] synthase III (324 aa).

Catalysis depends on residues Cys116 and His251. Positions 252 to 256 are ACP-binding; the sequence is QANLR. Asn281 is a catalytic residue.

Belongs to the thiolase-like superfamily. FabH family. In terms of assembly, homodimer.

It localises to the cytoplasm. The catalysed reaction is malonyl-[ACP] + acetyl-CoA + H(+) = 3-oxobutanoyl-[ACP] + CO2 + CoA. The protein operates within lipid metabolism; fatty acid biosynthesis. Its function is as follows. Catalyzes the condensation reaction of fatty acid synthesis by the addition to an acyl acceptor of two carbons from malonyl-ACP. Catalyzes the first condensation reaction which initiates fatty acid synthesis and may therefore play a role in governing the total rate of fatty acid production. Possesses both acetoacetyl-ACP synthase and acetyl transacylase activities. Its substrate specificity determines the biosynthesis of branched-chain and/or straight-chain of fatty acids. The sequence is that of Beta-ketoacyl-[acyl-carrier-protein] synthase III from Xylella fastidiosa (strain 9a5c).